Reading from the N-terminus, the 1252-residue chain is MQKSQNVTAVTETNGVAAALGGHHTSPDTNAGKTKDAKEFGCSLGDLRGLMEARGAEAIVRLSTEHEGVEGLCKKLKTDSLVGLNGEQADLDRRRHVYGANTIPPAKSKGFVRLVLDACKDPTLVILVLSGFINLALSFYEPTSAAEDATQHLVNATTAAILANGTFMSTTEAPSEGHGTAWIEGVAILLCVIVVVLVTAVNDYSKERQFRSLQEKIETGQKFSVIRNGEAIDVPVSDLVVGDIARVKYGDLLPADGFLIQSNDLKIDESSLTGESDHIKKSIESDPVLLSGTYAMEGSGKMLITAVGVNSQTGIIMTLLGAGKAGIGDDDSTSTSSSSSSSSSSSGSSSNGSSDSSKSGDDDLTAKSVLQAKLSKLALQIIYCGTTIAIIALIVLVTRFCLDHYVFEKNEFSLVDIQMFVKFFIIAVTILVISIPEGLPLAIALALTYSVRKMMHDNNLVRHLDACETMGNATSICSDKTGTLTTNRMTVVQSYINGNHYTSQEAQPHGANLPGSTGPILMEAISVNCAYNSMIVEPTKAGEQIQQLGNKTECGLLGFVNRLGGDYAAIRKKFPEHDLTKVYTFNSSRKCMMTVVPYAENGQNIGYRVYCKGASEIVLGRCTYLIGSDGKPHQLTGDRLKEITSTIIHEMANSGLRTICVAYKTIIKKGTRDVEKTEIEFAEDSDIDWDDEDAMYQNFTGIAICGIQDPVRPEVPVAISKCKKAGITVRMVTGDNIMTARAIAMSCKILEPGEDFLALEGKEFNERIRDENGKVSQAKLDEIWPRLRVLARAQPADKYTLVKGIIDSKATPQREIVAVTGDGTNDGPALKKADVGFAMGIAGTDVAKEASDIILTDDNFTSIVKAVMWGRNVYDSISKFLQFQLTVNVVAVITAFVGAVTVSDSPLKAVHMLWINLIMDTLASLALATEQPTDELLERKPYGRKKSLISRTMVKNILCHALYQLIIIFVIFFYGDTIFGIKTGLYAPLFAPPSQHFTLVFNAFVMMTVFNEINARKVHGERNVFKGLASNRVFCVIWVTTFIAQIIIVQFGGAWFSTAPLTLQQWIVCLVLGFSTLIWGQIVATIPSKKLPKAWKVGKGEVQPANLHINGDYNVRARSRAVTLRRSGKSLWVRGMFIIGNHLRVLRAFGMEKSEKAAFGRTAPAMTAEAAERWRASYRKYRHQKHQEKKATAETAESVKSADWAKEQKEKKKTFKQIKQVARGKSLDKDSKKHHKKRKDQTNVDMEDIELN.

Residues methionine 1–aspartate 121 are Cytoplasmic-facing. The helical transmembrane segment at proline 122–proline 142 threads the bilayer. Residues threonine 143–threonine 180 are Extracellular-facing. Asparagine 155 and asparagine 164 each carry an N-linked (GlcNAc...) asparagine glycan. The helical transmembrane segment at alanine 181–valine 201 threads the bilayer. The Cytoplasmic segment spans residues asparagine 202–lysine 376. Positions aspartate 330 to aspartate 361 are disordered. Residues threonine 333–serine 357 are compositionally biased toward low complexity. The helical transmembrane segment at leucine 377–valine 397 threads the bilayer. Residues threonine 398–lysine 422 lie on the Extracellular side of the membrane. A helical transmembrane segment spans residues phenylalanine 423–isoleucine 443. The Ca(2+) site is built by valine 432, isoleucine 435, and glutamate 437. Residues alanine 444–lysine 879 are Cytoplasmic-facing. Aspartate 479 functions as the 4-aspartylphosphate intermediate in the catalytic mechanism. Residues aspartate 479 and threonine 481 each contribute to the Mg(2+) site. Positions 481, 553, 612, 733, 734, 735, 792, and 798 each coordinate ATP. Aspartate 822 is a Mg(2+) binding site. ATP is bound at residue asparagine 825. The helical transmembrane segment at phenylalanine 880–valine 900 threads the bilayer. Residue asparagine 888 participates in Ca(2+) binding. Topologically, residues threonine 901–lysine 908 are extracellular. Residues alanine 909–threonine 929 traverse the membrane as a helical segment. Ca(2+) contacts are provided by asparagine 916 and aspartate 920. Residues glutamate 930–histidine 960 are Cytoplasmic-facing. A helical transmembrane segment spans residues alanine 961–isoleucine 981. Topologically, residues lysine 982–leucine 989 are extracellular. A helical transmembrane segment spans residues phenylalanine 990 to phenylalanine 1010. Over asparagine 1011–cysteine 1035 the chain is Cytoplasmic. Residues valine 1036–phenylalanine 1056 traverse the membrane as a helical segment. The Extracellular portion of the chain corresponds to serine 1057 to glutamine 1065. A helical transmembrane segment spans residues tryptophan 1066–isoleucine 1086. Residues proline 1087 to asparagine 1252 lie on the Cytoplasmic side of the membrane. The segment at leucine 1124–histidine 1142 is calmodulin-binding subdomain A. Positions leucine 1143–glutamate 1152 are calmodulin-binding subdomain B. The tract at residues tyrosine 1181–asparagine 1252 is disordered.

The protein belongs to the cation transport ATPase (P-type) (TC 3.A.3) family. Type IIB subfamily. As to quaternary structure, interacts with calmodulin.

It localises to the cell membrane. The catalysed reaction is Ca(2+)(in) + ATP + H2O = Ca(2+)(out) + ADP + phosphate + H(+). Catalyzes the hydrolysis of ATP coupled with the transport of calcium across a membrane. The sequence is that of Plasma membrane calcium-transporting ATPase mca-1 from Caenorhabditis elegans.